We begin with the raw amino-acid sequence, 500 residues long: MGQKTNPISLRLQNVNRNFDSCWYSDYFYAKCFSRDLYLNNYINTFFKLYRLPQARVCVNFGIQNIKVYPFFCIPKASRVSLAKNLGLFQHLSKAWNSSPKYFVSSKSKQLSQLKINDASLPVNNLNNNLFFNSSKHNEIRNKQNFFHNLELNKLNLSFKNSAYSDVKNYSFLENISAKLLLNFKEKSVINEVYYTTTNLGQIGNNISTNSIYSKQDMSDNSSKSLLKMLLREYYKSSDNKSSILYENKSPKSLENIFGKINEVSNINKKNLYLLNSETDNIPNLYKRKSKPTKFLRNEHNKVIEDKKTSLYFMPDSNQIKNDIYQGKISKISSISNNSKDSLTDYNLHLYQAYLHNILGNSKSLVSRNQFKYKNYIENFLSSQYNIDSQLFPFISKQNWQSAGFIADEIVYFIERRVSFSRIKNRILRQASMQSYVRGIRITCSGRVGGKSKKAQRATQECVKYGETSLHVFECKIDFASRIANTSFGLVGIKVWICFK.

The protein belongs to the universal ribosomal protein uS3 family.

It localises to the mitochondrion. This Prototheca wickerhamii protein is Small ribosomal subunit protein uS3m (RPS3).